The primary structure comprises 100 residues: Small ribosomal subunit protein uS14c (100 aa).

It belongs to the universal ribosomal protein uS14 family. Part of the 30S ribosomal subunit.

The protein resides in the plastid. It is found in the chloroplast. Its function is as follows. Binds 16S rRNA, required for the assembly of 30S particles. The polypeptide is Small ribosomal subunit protein uS14c (Morus indica (Mulberry)).